A 147-amino-acid chain; its full sequence is Putative pre-16S rRNA nuclease (147 aa).

The protein belongs to the YqgF nuclease family.

It is found in the cytoplasm. Could be a nuclease involved in processing of the 5'-end of pre-16S rRNA. The sequence is that of Putative pre-16S rRNA nuclease from Limosilactobacillus reuteri (strain DSM 20016) (Lactobacillus reuteri).